The primary structure comprises 493 residues: Amphoterin-induced protein 1 (493 aa).

The first 27 residues, Met1 to Ala27, serve as a signal peptide directing secretion. Residues Gly28 to Ser61 form the LRRNT domain. The Extracellular segment spans residues Gly28 to Thr372. 2 disulfides stabilise this stretch: Cys34–Cys40 and Cys38–Cys47. 6 LRR repeats span residues Tyr62–Thr83, Gln87–Pro108, Asn111–Asp132, Val135–Asp156, Gln159–Lys179, and Lys186–Gln206. An N-linked (GlcNAc...) asparagine glycan is attached at Asn72. An LRRCT domain is found at Asn221–Glu272. Intrachain disulfides connect Cys225–Cys253, Cys227–Cys270, and Cys290–Cys341. Residues Asn264, Asn315, Asn349, and Asn360 are each glycosylated (N-linked (GlcNAc...) asparagine). An Ig-like C2-type domain is found at Asn269–Ser353. A helical membrane pass occupies residues Ala373–Leu393. Topologically, residues Thr394–Val493 are cytoplasmic. The disordered stretch occupies residues Lys405–Val493. Positions Ser408–Asn424 are enriched in polar residues. Basic and acidic residues predominate over residues Gly431–Ala442. Ser477 and Ser481 each carry phosphoserine.

The protein belongs to the immunoglobulin superfamily. AMIGO family. In terms of assembly, homodimer, and heterodimer with AMIGO2 and AMIGO3. Interacts with KCNB1.

Its subcellular location is the cell membrane. It is found in the perikaryon. The protein localises to the cell projection. It localises to the dendrite. The protein resides in the axon. Its function is as follows. Promotes growth and fasciculation of neurites from cultured hippocampal neurons. May be involved in fasciculation as well as myelination of developing neural axons. May have a role in regeneration as well as neural plasticity in the adult nervous system. May mediate homophilic as well as heterophilic cell-cell interaction and contribute to signal transduction through its intracellular domain. Assembled with KCNB1 modulates the gating characteristics of the delayed rectifier voltage-dependent potassium channel KCNB1. This Homo sapiens (Human) protein is Amphoterin-induced protein 1.